The sequence spans 71 residues: uncharacterized protein (71 aa).

The chain crosses the membrane as a helical span at residues 12 to 34; sequence YLYNYFSSTTSWLVFIILSLDTI.

It is found in the membrane. This is an uncharacterized protein from Schizosaccharomyces pombe (strain 972 / ATCC 24843) (Fission yeast).